Consider the following 654-residue polypeptide: Ubiquitin-like modifier-activating enzyme ATG7 (654 aa).

A GXGXXG motif motif is present at residues 332 to 337 (GAGTLG). Cys-518 functions as the Glycyl thioester intermediate in the catalytic mechanism. A homodimerization region spans residues 615–654 (YLEDLTGLTKVKQESEIAEKKFQEFENGLEFSDEDSEWIN).

It belongs to the ATG7 family. In terms of assembly, homodimer. Interacts with ATG8 through a thioester bond between Cys-518 and the C-terminal 'Gly-116' of ATG8.

The protein resides in the cytoplasm. Its subcellular location is the preautophagosomal structure. Its function is as follows. E1-like activating enzyme involved in the 2 ubiquitin-like systems required for cytoplasm to vacuole transport (Cvt) and autophagy. Activates ATG12 for its conjugation with ATG5 and ATG8 for its conjugation with phosphatidylethanolamine. Both systems are needed for the ATG8 association to Cvt vesicles and autophagosomes membranes. Autophagy is essential for maintenance of amino acid levels and protein synthesis under nitrogen starvation. Required for selective autophagic degradation of the nucleus (nucleophagy) as well as for mitophagy which contributes to regulate mitochondrial quantity and quality by eliminating the mitochondria to a basal level to fulfill cellular energy requirements and preventing excess ROS production. Plays a role in the regulation of filamentous growth and chronological longevity. Involved in glucose-induced micropexophagy. This is Ubiquitin-like modifier-activating enzyme ATG7 (ATG7) from Komagataella pastoris (Yeast).